Reading from the N-terminus, the 371-residue chain is Phosphatase IMPL1, chloroplastic (371 aa).

The N-terminal 60 residues, 1–60, are a transit peptide targeting the chloroplast; sequence MGRSLIFSGNMSLRISHLPRSSLPLQNPISGRTVNRTFRYRCTRILSNSFKSTTRLQTKA. Valine 61 is subject to N-acetylvaline. Residues glutamate 148, aspartate 165, leucine 167, and aspartate 168 each coordinate Mg(2+). Residue glutamate 148 coordinates substrate. Residues 167–170, 273–275, glutamate 292, and aspartate 299 contribute to the substrate site; these read LDGT and GAA. Aspartate 299 is a binding site for Mg(2+).

The protein belongs to the inositol monophosphatase superfamily. The cofactor is Mg(2+). In terms of tissue distribution, ubiquitous. Expressed in pistil and seed endosperm.

It is found in the plastid. It localises to the chloroplast stroma. It catalyses the reaction a myo-inositol phosphate + H2O = myo-inositol + phosphate. The protein operates within polyol metabolism; myo-inositol biosynthesis; myo-inositol from D-glucose 6-phosphate: step 2/2. Phosphatase acting preferentially on D-myoinositol 1-phosphate (D-Ins 1-P). This chain is Phosphatase IMPL1, chloroplastic (IMPL1), found in Arabidopsis thaliana (Mouse-ear cress).